We begin with the raw amino-acid sequence, 160 residues long: 3-hydroxyacyl-[acyl-carrier-protein] dehydratase FabZ (160 aa).

Histidine 63 is a catalytic residue.

This sequence belongs to the thioester dehydratase family. FabZ subfamily.

It localises to the cytoplasm. It carries out the reaction a (3R)-hydroxyacyl-[ACP] = a (2E)-enoyl-[ACP] + H2O. Involved in unsaturated fatty acids biosynthesis. Catalyzes the dehydration of short chain beta-hydroxyacyl-ACPs and long chain saturated and unsaturated beta-hydroxyacyl-ACPs. This Xylella fastidiosa (strain M23) protein is 3-hydroxyacyl-[acyl-carrier-protein] dehydratase FabZ.